A 79-amino-acid chain; its full sequence is Major outer membrane lipoprotein Lpp 2 (79 aa).

The signal sequence occupies residues 1–21 (MNRTNKLILGAVVLGSTLLAG). C22 carries the N-palmitoyl cysteine lipid modification. A lipid anchor (S-diacylglycerol cysteine) is attached at C22. 2 consecutive repeats follow at residues 25-35 (NAKIDQLSSDV) and 39-49 (SAKVDQLSNDV). Residues 28-69 (IDQLSSDVQTLSAKVDQLSNDVNAMRSDVQAAKDDAARANQR) adopt a coiled-coil conformation. At K79 the chain carries N6-murein peptidoglycan lysine.

The protein belongs to the Lpp family. In terms of assembly, homotrimer.

The protein localises to the cell outer membrane. It localises to the secreted. The protein resides in the cell wall. Its function is as follows. A highly abundant outer membrane lipoprotein that controls the distance between the inner and outer membranes. The only protein known to be covalently linked to the peptidoglycan network (PGN). Also non-covalently binds the PGN. The link between the cell outer membrane and PGN contributes to maintenance of the structural and functional integrity of the cell envelope, and maintains the correct distance between the PGN and the outer membrane. This is Major outer membrane lipoprotein Lpp 2 from Salmonella typhi.